Reading from the N-terminus, the 79-residue chain is U-actitoxin-Oulsp1 (79 aa).

The signal sequence occupies residues 1 to 21 (MNTKLVVVFLLSAILFVSVTA). The propeptide occupies 22–43 (SRPGKDLERDEAYETYDDENKR). The region spanning 45-79 (CKDVFPAATCRHAKSVGNCSSEKYKRNCAITCGAC) is the ShKT domain. Disulfide bonds link C45/C79, C54/C72, and C63/C76. Residues 67 to 68 (KY) form a crucial for binding to potassium channels region.

The protein belongs to the sea anemone type 1 potassium channel toxin family. Type 1b subfamily. In terms of processing, two similar peptides (OspTx2a-p1 and -p2) are obtained after synthesis and oxidative folding. They may differ by a D-Cys at position 76 (corresponding to OspTx2a-p2). Since C-terminal Cys residues are prone to racemization during solid-phase peptide synthesis, and if the presence of a D-amino acid is correct, it is probable that OspTx2a-p1 (L-Cys-76 form) corresponds to the native peptide.

The protein localises to the secreted. Functionally, toxin that weakly blocks the two voltage-gated potassium channels on Kv1.2/KCNA2 (IC(50)=1.8-2.5 uM) and Kv1.6/KCNA6 (IC(50)=5.6-6.2 uM). The polypeptide is U-actitoxin-Oulsp1 (Oulactis sp. (Sea anemone)).